The primary structure comprises 156 residues: Regulatory protein RecX (156 aa).

This sequence belongs to the RecX family.

It is found in the cytoplasm. Modulates RecA activity. The protein is Regulatory protein RecX of Pseudomonas putida (strain GB-1).